A 267-amino-acid chain; its full sequence is Cell division protein FtsQ (267 aa).

At 1–32 (MRKKTSSNKKKQTKKTNNISLRRKLGLMYKKA) the chain is on the cytoplasmic side. The chain crosses the membrane as a helical span at residues 33-53 (ILGLKIALIIFVCLFVFTKYF). Residues 54–267 (AGIKTYLTTN…DKNKYYIEKY (214 aa)) lie on the Periplasmic side of the membrane. In terms of domain architecture, POTRA spans 73–141 (FKLENVIIEG…NTVYIKLFER (69 aa)).

Belongs to the FtsQ/DivIB family. FtsQ subfamily.

It is found in the cell inner membrane. In terms of biological role, essential cell division protein. The sequence is that of Cell division protein FtsQ from Rickettsia conorii (strain ATCC VR-613 / Malish 7).